The primary structure comprises 171 residues: Allophycocyanin subunit beta-18 (171 aa).

Asn72 is subject to N4-methylasparagine. Cys82 contacts (2R,3E)-phycocyanobilin.

It belongs to the phycobiliprotein family. In terms of assembly, heterodimer of an alpha and a beta chain. Post-translationally, contains one covalently linked bilin chromophore.

The protein resides in the plastid. It localises to the chloroplast thylakoid membrane. Its function is as follows. Light-harvesting photosynthetic bile pigment-protein from the phycobiliprotein complex. Allophycocyanin has a maximum absorption at approximately 650 nanometers. The sequence is that of Allophycocyanin subunit beta-18 (apcF) from Aglaothamnion neglectum (Red alga).